Here is a 584-residue protein sequence, read N- to C-terminus: Ras-specific guanine nucleotide-releasing factor RalGPS1 (584 aa).

Residues 1 to 13 (MDLMNGQSSSVNI) are compositionally biased toward polar residues. Disordered stretches follow at residues 1 to 29 (MDLM…SLSD), 285 to 338 (IEPG…IPHG), and 380 to 407 (HVPS…SELS). Low complexity predominate over residues 14 to 26 (AATASEKSSSSES). The Ras-GEF domain occupies 50-288 (TPEEYAGQIT…YKLSLKIEPG (239 aa)). The PXXP signature appears at 326–329 (PTPP). Low complexity predominate over residues 388–404 (ESSTLSSGISIGSSDGS). Residues 458 to 570 (AVTIQGVLRR…WFKHLSAACQ (113 aa)) enclose the PH domain.

It localises to the cytoplasm. The protein localises to the cell membrane. Functionally, guanine nucleotide exchange factor. May be involved in cytoskeletal organization. The chain is Ras-specific guanine nucleotide-releasing factor RalGPS1 (RALGPS1) from Gallus gallus (Chicken).